Consider the following 441-residue polypeptide: Protein translocase subunit SecY (441 aa).

Transmembrane regions (helical) follow at residues Leu24–Ile44, Ile77–Thr97, Ala123–Leu143, Phe152–Leu172, Ile181–Ile201, Pro215–Val235, Val272–Phe292, Pro313–Met333, Leu373–Trp393, and Phe397–Gln417.

Belongs to the SecY/SEC61-alpha family. As to quaternary structure, component of the Sec protein translocase complex. Heterotrimer consisting of SecY, SecE and SecG subunits. The heterotrimers can form oligomers, although 1 heterotrimer is thought to be able to translocate proteins. Interacts with the ribosome. Interacts with SecDF, and other proteins may be involved. Interacts with SecA.

The protein localises to the cell inner membrane. The central subunit of the protein translocation channel SecYEG. Consists of two halves formed by TMs 1-5 and 6-10. These two domains form a lateral gate at the front which open onto the bilayer between TMs 2 and 7, and are clamped together by SecE at the back. The channel is closed by both a pore ring composed of hydrophobic SecY resides and a short helix (helix 2A) on the extracellular side of the membrane which forms a plug. The plug probably moves laterally to allow the channel to open. The ring and the pore may move independently. This chain is Protein translocase subunit SecY, found in Haemophilus influenzae (strain ATCC 51907 / DSM 11121 / KW20 / Rd).